A 563-amino-acid polypeptide reads, in one-letter code: Eukaryotic translation initiation factor 3 subunit D-1 (563 aa).

Residues 98–167 are disordered; it reads VQKPPHQRGR…GPPPKMRESS (70 aa). The span at 100–121 shows a compositional bias: basic residues; it reads KPPHQRGRFRNMRNSRSGRGRN. The residue at position 128 (Thr-128) is a Phosphothreonine. The interval 291–305 is RNA gate; that stretch reads EFDLLTVNESSVEPP.

Belongs to the eIF-3 subunit D family. Component of the eukaryotic translation initiation factor 3 (eIF-3) complex. The eIF-3 complex interacts with pix.

It is found in the cytoplasm. Its function is as follows. mRNA cap-binding component of the eukaryotic translation initiation factor 3 (eIF-3) complex, which is involved in protein synthesis of a specialized repertoire of mRNAs and, together with other initiation factors, stimulates binding of mRNA and methionyl-tRNAi to the 40S ribosome. The eIF-3 complex specifically targets and initiates translation of a subset of mRNAs involved in cell proliferation. In the eIF-3 complex, eif3d specifically recognizes and binds the 7-methylguanosine cap of a subset of mRNAs. The chain is Eukaryotic translation initiation factor 3 subunit D-1 from Drosophila grimshawi (Hawaiian fruit fly).